The chain runs to 607 residues: Threonine--tRNA ligase (607 aa).

Residues 200 to 502 are catalytic; it reads DHRKLGRELG…LIEEYAGDFP (303 aa). Residues C299, H350, and H479 each contribute to the Zn(2+) site.

The protein belongs to the class-II aminoacyl-tRNA synthetase family. In terms of assembly, homodimer. It depends on Zn(2+) as a cofactor.

The protein resides in the cytoplasm. It carries out the reaction tRNA(Thr) + L-threonine + ATP = L-threonyl-tRNA(Thr) + AMP + diphosphate + H(+). In terms of biological role, catalyzes the attachment of threonine to tRNA(Thr) in a two-step reaction: L-threonine is first activated by ATP to form Thr-AMP and then transferred to the acceptor end of tRNA(Thr). Also edits incorrectly charged L-seryl-tRNA(Thr). This chain is Threonine--tRNA ligase, found in Synechococcus sp. (strain ATCC 27144 / PCC 6301 / SAUG 1402/1) (Anacystis nidulans).